Consider the following 629-residue polypeptide: tRNA uridine 5-carboxymethylaminomethyl modification enzyme MnmG (629 aa).

Residues 13 to 18, V125, and S180 contribute to the FAD site; that span reads GGGHAG. 273–287 is an NAD(+) binding site; the sequence is GPRYCPSIEDKIHRF. Q370 serves as a coordination point for FAD.

This sequence belongs to the MnmG family. In terms of assembly, homodimer. Heterotetramer of two MnmE and two MnmG subunits. FAD is required as a cofactor.

It is found in the cytoplasm. Functionally, NAD-binding protein involved in the addition of a carboxymethylaminomethyl (cmnm) group at the wobble position (U34) of certain tRNAs, forming tRNA-cmnm(5)s(2)U34. The polypeptide is tRNA uridine 5-carboxymethylaminomethyl modification enzyme MnmG (Shewanella sp. (strain ANA-3)).